Reading from the N-terminus, the 148-residue chain is Photosystem II extrinsic protein U, chloroplastic (148 aa).

The transit peptide at M1–A32 directs the protein to the chloroplast. A thylakoid-targeting transit peptide spans E33–N54.

It belongs to the PsbU family. In terms of assembly, PSII is composed of 1 copy each of membrane proteins PsbA, PsbB, PsbC, PsbD, PsbE, PsbF, PsbH, PsbI, PsbJ, PsbK, PsbL, PsbM, PsbT, PsbX, PsbY, PsbZ, Psb30/Ycf12, at least 3 peripheral proteins of the oxygen-evolving complex and a large number of cofactors. It forms dimeric complexes. The oxygen-evolving complex may be composed of PsbO, PsbQ', PsbV and PsbU.

Its subcellular location is the plastid. The protein resides in the chloroplast thylakoid membrane. In terms of biological role, one of the extrinsic, lumenal subunits of photosystem II (PSII), which stabilize and protect the oxygen-evolving complex. PSII is a light-driven water plastoquinone oxidoreductase, using light energy to abstract electrons from H(2)O, generating a proton gradient subsequently used for ATP formation. Stabilizes the structure of photosystem II oxygen-evolving complex (OEC), the ion environment of oxygen evolution and protects the OEC against heat-induced inactivation. The sequence is that of Photosystem II extrinsic protein U, chloroplastic from Phaeodactylum tricornutum (Diatom).